A 230-amino-acid chain; its full sequence is Large ribosomal subunit protein uL1 (230 aa).

It belongs to the universal ribosomal protein uL1 family. As to quaternary structure, part of the 50S ribosomal subunit.

Functionally, binds directly to 23S rRNA. The L1 stalk is quite mobile in the ribosome, and is involved in E site tRNA release. Its function is as follows. Protein L1 is also a translational repressor protein, it controls the translation of the L11 operon by binding to its mRNA. In Acidithiobacillus ferrooxidans (strain ATCC 53993 / BNL-5-31) (Leptospirillum ferrooxidans (ATCC 53993)), this protein is Large ribosomal subunit protein uL1.